Reading from the N-terminus, the 145-residue chain is Peptide methionine sulfoxide reductase MsrB (145 aa).

The 124-residue stretch at 6 to 129 (KNERLQQLTD…NSAALRFIPV (124 aa)) folds into the MsrB domain. The Nucleophile role is filled by C118.

Belongs to the MsrB Met sulfoxide reductase family.

The enzyme catalyses L-methionyl-[protein] + [thioredoxin]-disulfide + H2O = L-methionyl-(R)-S-oxide-[protein] + [thioredoxin]-dithiol. In Listeria monocytogenes serotype 4a (strain HCC23), this protein is Peptide methionine sulfoxide reductase MsrB.